A 242-amino-acid polypeptide reads, in one-letter code: Probable transcriptional regulatory protein PXO_01555 (242 aa).

It belongs to the TACO1 family.

It localises to the cytoplasm. This Xanthomonas oryzae pv. oryzae (strain PXO99A) protein is Probable transcriptional regulatory protein PXO_01555.